The following is a 409-amino-acid chain: Wadjet protein JetD (409 aa).

Functionally, component of antiplasmid transformation system Wadjet type I, composed of JetA, JetB, JetC and JetD. Expression of Wadjet type I in B.subtilis (strain BEST7003) reduces the transformation efficiency of plasmid pHCMC05. The protein is Wadjet protein JetD of Bacillus cereus (strain Q1).